A 371-amino-acid polypeptide reads, in one-letter code: Cytochrome b (371 aa).

The next 4 membrane-spanning stretches (helical) occupy residues 24–44 (FGSM…FLAL), 68–89 (WTMQ…YIHI), 104–124 (WLSG…GYVL), and 169–189 (FFAL…VHIV). 2 residues coordinate heme b: His74 and His88. Heme b-binding residues include His173 and His187. Position 192 (His192) interacts with a ubiquinone. Helical transmembrane passes span 217–237 (YKDT…MSFA), 279–299 (LGGT…PFTH), 311–331 (LSQL…WTAT), and 338–357 (FITI…MTNP).

Belongs to the cytochrome b family. As to quaternary structure, the cytochrome bc1 complex contains 3 respiratory subunits (MT-CYB, CYC1 and UQCRFS1), 2 core proteins (UQCRC1 and UQCRC2) and probably 6 low-molecular weight proteins. The cofactor is heme b.

The protein localises to the mitochondrion inner membrane. In terms of biological role, component of the ubiquinol-cytochrome c reductase complex (complex III or cytochrome b-c1 complex) that is part of the mitochondrial respiratory chain. The b-c1 complex mediates electron transfer from ubiquinol to cytochrome c. Contributes to the generation of a proton gradient across the mitochondrial membrane that is then used for ATP synthesis. The chain is Cytochrome b (MT-CYB) from Homoroselaps lacteus (Spotted harlequin snake).